The sequence spans 467 residues: 3-isopropylmalate dehydratase large subunit (467 aa).

The [4Fe-4S] cluster site is built by cysteine 347, cysteine 407, and cysteine 410.

This sequence belongs to the aconitase/IPM isomerase family. LeuC type 1 subfamily. In terms of assembly, heterodimer of LeuC and LeuD. Requires [4Fe-4S] cluster as cofactor.

It carries out the reaction (2R,3S)-3-isopropylmalate = (2S)-2-isopropylmalate. Its pathway is amino-acid biosynthesis; L-leucine biosynthesis; L-leucine from 3-methyl-2-oxobutanoate: step 2/4. In terms of biological role, catalyzes the isomerization between 2-isopropylmalate and 3-isopropylmalate, via the formation of 2-isopropylmaleate. This Picosynechococcus sp. (strain ATCC 27264 / PCC 7002 / PR-6) (Agmenellum quadruplicatum) protein is 3-isopropylmalate dehydratase large subunit.